The primary structure comprises 204 residues: Outer-membrane lipoprotein carrier protein (204 aa).

The signal sequence occupies residues methionine 1–alanine 21.

This sequence belongs to the LolA family. As to quaternary structure, monomer.

It is found in the periplasm. In terms of biological role, participates in the translocation of lipoproteins from the inner membrane to the outer membrane. Only forms a complex with a lipoprotein if the residue after the N-terminal Cys is not an aspartate (The Asp acts as a targeting signal to indicate that the lipoprotein should stay in the inner membrane). In Histophilus somni (strain 2336) (Haemophilus somnus), this protein is Outer-membrane lipoprotein carrier protein.